Consider the following 230-residue polypeptide: UPF0173 metal-dependent hydrolase Acid_3917 (230 aa).

Belongs to the UPF0173 family.

This chain is UPF0173 metal-dependent hydrolase Acid_3917, found in Solibacter usitatus (strain Ellin6076).